Reading from the N-terminus, the 1905-residue chain is MVEVYFIDHGNTEMVDWYNVKKLPAELREMPGLAIHCCVADICPLGVRWSPEAILAFKIAVVDKKLIIYVVSKELHKYIIEVLDNSRIEQRSMAKILSAAGHAKYEEVEPVAQHTGNMSDIDNETQQQFLGYINKDTSSLKTQQKEDVCSMEDDNSVPYSPYEDQFFEPGATIEVVVSCIISPGLFWCQNASLSSKLEKLMAKIQDYCSSTDCPYERGAYACLAKSSCDGKWYRAFITNNRPGSKANANQVEVLYVDYGITETVLVKDLRCIESELFDLKAQAFRCSLYNLIAPDSENPFEWDTKATLSFHRFVDSSAKKCSEFKCTFFATALVKTELSYIVDVFTPFASICKLLVELGHAKQLSHTTLAPSVQLQTYYYSMHDIKIGGEEEVYITYVNSSLEFYCQLSRNTETIDMIASATARVCSEVRKFELSVTPGPLCLAKFSDQQWYRCFINTNKNSTDAFFVDYGNTEKVNKEEMLPIPSDAYELLHFPMQAIKCSLSDMPDTVPSDVVLWFENHVLEKPLRAIIVAKETDGKLIVELYDGSQQINSILKTKLGWKSSRAEGSFGNSEKRNQLNDLDRGGRKETTSKFQPYSQGSKFSPDLDGHSQNGLTYQKPEFQTKEREQFEQKPNLRTPRSYNNDREVYQVQKNMSQSGFAPQKTGGFRSKDREAFEQRPNLKASGLYSQGRETPSMSQNSSYSGFPPQKTGAFRSKERQVSEHKQNSNPPKFYNQERKLSPQLRKASQNGSSSQTEAFWSSGSDQSSEHKPDNASQQRRSTFQESKLTPPLSKLSDLPKQNIALGMKSSVYVAHTNTISDFYVHIAQNTDLSNISEILNNEKGPSDQLDEKYVNLGDLICAFYEDGLYYRAVITEKCADGLLAQYIDYGNTSVIPPTKIYKLPPSLLSIPAMSICCALDKCTTSACEQNMDDLMLKFSERTGDLELSCEFVQYNNRKWNVILCDDQGCINDLFISVSGDPMLNPPLPKEPSVTSETLISASLFVWNLPELGETVEAFASAVDSPEHFWCQLATANVDSLAVKVQEAGEHSIHDGRFSAEIEVGSPCNVIYSDDNYWYRAAVTKMKDDKVTVRFVDYGNEETLQMEQVRRLPADIAAIPVQAFPCSLANFNLSEGCWSSEANTFFYDKVTEGLLEITVLHIQELGLCKIPQASVNVKYNGEDINCEMRRFWQDSFVNTNPFTESLNAKEETAIEDNVIPSQADEDDHSEPSEEPCASESIETPAVDGEVLTANDETKLEALPVSSAEEAAEITDNTDVELMRTEYLLHEVQKSSDLSCLELTLDEDVPDEKNSGTPAVTPLAAEDLCIDYDESNIKKSYSGVTTEMDNRELHQDEDLDLWTSAAQDQEIASSEILGDVPIDKECNYSVEEATDQSCTNIGLEEGPEPVENAFTENINDETDIANVQSKGEEEEAYLVPEESTVAECEIEDFEPEVDLQSKENEGLPDIPLLEGDGDDSVSPEEVSSHEMNEAEGLEDQDQELLGYTGTERAMDDYEVLQSEEQAEDLVPEEDPGTETEHRSYLFEAEEADLPSQEHKDFPEQEEDRVAEHKNDISEPDLQSKEQKEDLVPEEDPGTETEHRSYLFEAEETDLPSQEHKDTVTYTDIPLLEGGVDDFGSKETVSIDYNYEYVTEDVEDLDTENQESQICISGSDNRSKESGPVDLQDFEDEVLFQYTEPTADSASDVRQGDECEFAAHSDENIESPEHPVHTDSTADVCETDVCEPEVADHCHLQDKVVSERTECPVPDDRTKDDHQNNECQCAVDPVENIECQTPVCLVAADRSYTEYTWTVSETESGNMKNIEFQESPAEGDSVGSHGVGATEWKDGEPESLVNPDTPLLEGPVSVDIMHSSDNFEPETDDMEQMEQDQGRMKIESSYVPAPSV.

Tudor domains lie at 1–30, 215–279, and 435–491; these read MVEV…LREM, YERG…LFDL, and SVTP…AYEL. The tract at residues 564-795 is disordered; that stretch reads SRAEGSFGNS…SKLTPPLSKL (232 aa). Residues 573-591 show a composition bias toward basic and acidic residues; sequence SEKRNQLNDLDRGGRKETT. Over residues 592 to 602 the composition is skewed to polar residues; it reads SKFQPYSQGSK. Residues 622-631 are compositionally biased toward basic and acidic residues; the sequence is FQTKEREQFE. Composition is skewed to polar residues over residues 651 to 660 and 687 to 704; these read VQKNMSQSGF and LYSQ…SSYS. Residues 715–726 are compositionally biased toward basic and acidic residues; it reads RSKERQVSEHKQ. 2 stretches are compositionally biased toward polar residues: residues 746–766 and 774–787; these read KASQ…GSDQ and NASQ…QESK. Tudor domains are found at residues 853-910 and 1060-1118; these read YVNL…LLSI and EIEV…IAAI. Disordered regions lie at residues 1213 to 1245, 1449 to 1599, 1655 to 1682, and 1827 to 1905; these read IEDN…TPAV, EDFE…TETE, VEDL…SGPV, and ESPA…APSV. 2 stretches are compositionally biased toward acidic residues: residues 1491–1500 and 1522–1535; these read EAEGLEDQDQ and EQAE…DPGT. The segment covering 1553–1588 has biased composition (basic and acidic residues); it reads SQEHKDFPEQEEDRVAEHKNDISEPDLQSKEQKEDL. Residues 1663 to 1673 show a composition bias toward polar residues; sequence QESQICISGSD. Residues 1876–1887 show a composition bias toward acidic residues; that stretch reads FEPETDDMEQME.

In terms of assembly, interacts with FRGY2 (a component of messenger ribonucleoprotein (mRNP) particle) during germ cell development. As to expression, expressed in testis.

The protein resides in the cytoplasm. Tudor domain-containing protein involved in germ cell development, more specifically the formation of chromatoid body (during spermiogenesis), Balbiani body (during oogenesis), germ plasm (upon fertilization), and for proper miRNA expression and spliceosome maturation. Component of cytoplasmic mRNP particle through interaction with FRGY2, and binds to maternal mRNA related to cell cycle (RCC1, RHAMM, INCENP-A, MAD2L1, HELLS) and a germ plasm specific mRNA (Dead end/Dnd1), it is proposed a role in translational activation of the maternal mRNAs repressed in mRNP particle. In Xenopus laevis (African clawed frog), this protein is Tudor domain-containing 6-like.